Here is a 128-residue protein sequence, read N- to C-terminus: Fluoride-specific ion channel FluC (128 aa).

The next 4 helical transmembrane spans lie at 4–24 (LILA…RYLI), 37–57 (PYGT…IMDI), 63–83 (LISG…LTTF), and 99–119 (ILMG…GVII). 2 residues coordinate Na(+): glycine 78 and threonine 81.

The protein belongs to the fluoride channel Fluc/FEX (TC 1.A.43) family.

The protein localises to the cell membrane. The enzyme catalyses fluoride(in) = fluoride(out). Its activity is regulated as follows. Na(+) is not transported, but it plays an essential structural role and its presence is essential for fluoride channel function. Functionally, fluoride-specific ion channel. Important for reducing fluoride concentration in the cell, thus reducing its toxicity. The protein is Fluoride-specific ion channel FluC of Clostridium novyi (strain NT).